The primary structure comprises 267 residues: Cyclin-C (267 aa).

The Cyclin N-terminal domain occupies 48–151 (IQVLGEQLKL…LLENLDCCLI (104 aa)).

The protein belongs to the cyclin family. Cyclin C subfamily. As to quaternary structure, component of the Cdk8 module of the Mediator complex, composed of CycC, Cdk8, kto and skd.

It localises to the nucleus. In terms of biological role, component of the Mediator complex, a coactivator involved in regulated gene transcription of nearly all RNA polymerase II-dependent genes. Mediator functions as a bridge to convey information from gene-specific regulatory proteins to the basal RNA polymerase II transcription machinery. Mediator is recruited to promoters by direct interactions with regulatory proteins and serves as a scaffold for the assembly of a functional preinitiation complex with RNA polymerase II and the general transcription factors. Binds to and activates cyclin-dependent kinase Cdk8 that phosphorylates the CTD (C-terminal domain) of the large subunit of RNA polymerase II (RNAp II), which may inhibit the formation of a transcription initiation complex. Required for leg and eye development and macrochaete specification or differentiation. This is Cyclin-C (CycC) from Drosophila melanogaster (Fruit fly).